Consider the following 263-residue polypeptide: tRNA uridine(34) hydroxylase (263 aa).

The region spanning Glu-129–Tyr-223 is the Rhodanese domain. Cys-183 functions as the Cysteine persulfide intermediate in the catalytic mechanism.

The protein belongs to the TrhO family.

The catalysed reaction is uridine(34) in tRNA + AH2 + O2 = 5-hydroxyuridine(34) in tRNA + A + H2O. Functionally, catalyzes oxygen-dependent 5-hydroxyuridine (ho5U) modification at position 34 in tRNAs. In Variovorax paradoxus (strain S110), this protein is tRNA uridine(34) hydroxylase.